Reading from the N-terminus, the 50-residue chain is uncharacterized protein (50 aa).

The tract at residues 1–50 (MKTGFWQQVLPKRAGRRKEHPVQYMPHKKEENATGLMNPSLHTSHSAILK) is disordered. Polar residues predominate over residues 35–50 (GLMNPSLHTSHSAILK).

This is an uncharacterized protein from Treponema pallidum (strain Nichols).